Consider the following 232-residue polypeptide: Purine nucleoside phosphorylase DeoD-type (232 aa).

Position 4 (His-4) interacts with a purine D-ribonucleoside. Residues Gly-20, Arg-24, Arg-43, and 87 to 90 (RVGS) contribute to the phosphate site. Residues Glu-162, 178-180 (EME), and 202-203 (SD) each bind a purine D-ribonucleoside. Asp-203 (proton donor) is an active-site residue.

Belongs to the PNP/UDP phosphorylase family. In terms of assembly, homohexamer; trimer of homodimers.

It catalyses the reaction a purine D-ribonucleoside + phosphate = a purine nucleobase + alpha-D-ribose 1-phosphate. The catalysed reaction is a purine 2'-deoxy-D-ribonucleoside + phosphate = a purine nucleobase + 2-deoxy-alpha-D-ribose 1-phosphate. In terms of biological role, catalyzes the reversible phosphorolytic breakdown of the N-glycosidic bond in the beta-(deoxy)ribonucleoside molecules, with the formation of the corresponding free purine bases and pentose-1-phosphate. The sequence is that of Purine nucleoside phosphorylase DeoD-type from Bacillus velezensis (strain DSM 23117 / BGSC 10A6 / LMG 26770 / FZB42) (Bacillus amyloliquefaciens subsp. plantarum).